A 185-amino-acid polypeptide reads, in one-letter code: MMTHLRPALASLLALSLLTGVAYPLALTGIAAVIAPDRAAGSLILREGQVVGSALIGQGFDGPGYLHPRPSASDWNAAGTFASNLGPTSAALLAEVQERQAAYEARNGASAPVDAVTASGSGLDPHVSPANARAQAARIARARGLDEAAVRRLIEAHVEPPLLGLWGQARVDVLAVNLALDAAGA.

A helical membrane pass occupies residues 14–34; it reads ALSLLTGVAYPLALTGIAAVI.

It belongs to the KdpC family. The system is composed of three essential subunits: KdpA, KdpB and KdpC.

The protein resides in the cell inner membrane. In terms of biological role, part of the high-affinity ATP-driven potassium transport (or Kdp) system, which catalyzes the hydrolysis of ATP coupled with the electrogenic transport of potassium into the cytoplasm. This subunit acts as a catalytic chaperone that increases the ATP-binding affinity of the ATP-hydrolyzing subunit KdpB by the formation of a transient KdpB/KdpC/ATP ternary complex. This Cereibacter sphaeroides (strain ATCC 17023 / DSM 158 / JCM 6121 / CCUG 31486 / LMG 2827 / NBRC 12203 / NCIMB 8253 / ATH 2.4.1.) (Rhodobacter sphaeroides) protein is Potassium-transporting ATPase KdpC subunit.